Reading from the N-terminus, the 421-residue chain is MSELLDSFETEFAKFYTDSNLEETNLQKCLDHTHEFKSQLKKLKAHLNKHIQESKPEVYNKLSDKEKQKFKRKRELIIEKLSKSQRQWDHSVKKQIKYVSQQSNRFNKSTLNKLKEFDIDSVYVNKLPKETMENVNEAIGYHILRYSIDNMPLGNKNEAFQYLKDVYGITNKESTEFIEMGQIVHDLKKGDTESCLKWCSNEMESLSSNHTALSSLKFDLYTLSAMQIVKHGNPVELYYQITQNAPLDCFRHREKELMQNVVPLLTKSLIGQPIEDIDSKVNKELKECTSLFIKEYCAAKHIFFDSPLFLIVLSGLISFQFFIKYKTIRELAHVDWTTKDELPFDVKLPDFLTHFHPIFICPVLKEETTTENPPYSLACHHIISKKALDRLSKNGTITFKCPYCPVNTSMSSTKKVRFVML.

The CTLH domain maps to 176-236 (EFIEMGQIVH…QIVKHGNPVE (61 aa)). The segment at 361–404 (CPVLKEETTTENPPYSLACHHIISKKALDRLSKNGTITFKCPYC) adopts an RING-Gid-type zinc-finger fold.

The protein belongs to the RMD5/GID2 family. As to quaternary structure, identified in the GID/CTLH complex. In the absence of stress, the complex exists as an inactive anticipatory complex (GID(Ant)), composed of VID30/GID1, the E3 ubiquitin-ligase RMD5/GID2, VID28/GID5, GID8, and the RING-like subunit FYV10/GID9, awaiting a substrate receptor to form the active E3 ligase complex. When cells are shifted to glucose-containing medium, the substrate receptor VID24/GID4 is induced and becomes part of the complex, named GID(SR4). Additionally, GID7 transforms the GID(SR4) E3 ligase core into a higher-order supramolecular assembly (Chelator-GID(SR4)) specifically tailored for FBP1 ubiquitination. Under osmotic or heat stress, the substrate receptor GID10 is induced and becomes part of the complex, named GID(SR10). Within the GID complex, interacts directly with GID8, FYV10/GID9 and VID28/GID5.

Its subcellular location is the cytoplasm. It catalyses the reaction S-ubiquitinyl-[E2 ubiquitin-conjugating enzyme]-L-cysteine + [acceptor protein]-L-lysine = [E2 ubiquitin-conjugating enzyme]-L-cysteine + N(6)-ubiquitinyl-[acceptor protein]-L-lysine.. Its pathway is protein modification; protein ubiquitination. Functionally, E3 ubiquitin-protein ligase component of the GID E3 ligase complex recruiting N termini and catalyzing ubiquitination of proteins targeted for degradation. GID E3 is regulated through assembly with interchangeable N-degron-binding substrate receptors induced by distinct environmental perturbations. Required for the adaptation to the presence of glucose in the growth medium; mediates in association with the substrate receptor VID24/GID4 the degradation of enzymes involved in gluconeogenesis when cells are shifted to glucose-containing medium. Required for proteasome-dependent catabolite degradation of fructose-1,6-bisphosphatase (FBP1), malate dehydrogenase (MDH2), and other gluconeogenic enzymes. The sequence is that of E3 ubiquitin-protein ligase RMD5 from Saccharomyces cerevisiae (strain ATCC 204508 / S288c) (Baker's yeast).